Here is a 511-residue protein sequence, read N- to C-terminus: Exodeoxyribonuclease 7 large subunit (511 aa).

It belongs to the XseA family. Heterooligomer composed of large and small subunits.

It is found in the cytoplasm. The catalysed reaction is Exonucleolytic cleavage in either 5'- to 3'- or 3'- to 5'-direction to yield nucleoside 5'-phosphates.. In terms of biological role, bidirectionally degrades single-stranded DNA into large acid-insoluble oligonucleotides, which are then degraded further into small acid-soluble oligonucleotides. The chain is Exodeoxyribonuclease 7 large subunit from Brucella canis (strain ATCC 23365 / NCTC 10854 / RM-666).